We begin with the raw amino-acid sequence, 343 residues long: Transcription factor BPE (343 aa).

Positions 142 to 192 constitute a bHLH domain; the sequence is QATDSHSLAERARREKISERMKILQDLVPGCNKVIGKALVLDEIINYIQSL.

As to quaternary structure, homodimer. Specifically expressed in flowers, mostly in petals, inflorescence and flower buds. In terms of tissue distribution, expressed ubiquitously (leaves, flowers and stems).

The protein localises to the nucleus. Its function is as follows. Involved in the control of petal size, by interfering with postmitotic cell expansion to limit final petal cell size. The chain is Transcription factor BPE (BPE) from Arabidopsis thaliana (Mouse-ear cress).